We begin with the raw amino-acid sequence, 257 residues long: 1-(5-phosphoribosyl)-5-[(5-phosphoribosylamino)methylideneamino] imidazole-4-carboxamide isomerase (257 aa).

Asp-8 (proton acceptor) is an active-site residue. The active-site Proton donor is Asp-129.

It belongs to the HisA/HisF family.

Its subcellular location is the cytoplasm. It carries out the reaction 1-(5-phospho-beta-D-ribosyl)-5-[(5-phospho-beta-D-ribosylamino)methylideneamino]imidazole-4-carboxamide = 5-[(5-phospho-1-deoxy-D-ribulos-1-ylimino)methylamino]-1-(5-phospho-beta-D-ribosyl)imidazole-4-carboxamide. It functions in the pathway amino-acid biosynthesis; L-histidine biosynthesis; L-histidine from 5-phospho-alpha-D-ribose 1-diphosphate: step 4/9. The polypeptide is 1-(5-phosphoribosyl)-5-[(5-phosphoribosylamino)methylideneamino] imidazole-4-carboxamide isomerase (Cyanothece sp. (strain PCC 7425 / ATCC 29141)).